A 705-amino-acid chain; its full sequence is Elongation factor G (705 aa).

The 283-residue stretch at 8-290 (EKYRNIGICA…GVVEYLPAPN (283 aa)) folds into the tr-type G domain. Residues 17–24 (AHVDAGKT), 88–92 (DTPGH), and 142–145 (NKMD) contribute to the GTP site.

This sequence belongs to the TRAFAC class translation factor GTPase superfamily. Classic translation factor GTPase family. EF-G/EF-2 subfamily.

The protein resides in the cytoplasm. In terms of biological role, catalyzes the GTP-dependent ribosomal translocation step during translation elongation. During this step, the ribosome changes from the pre-translocational (PRE) to the post-translocational (POST) state as the newly formed A-site-bound peptidyl-tRNA and P-site-bound deacylated tRNA move to the P and E sites, respectively. Catalyzes the coordinated movement of the two tRNA molecules, the mRNA and conformational changes in the ribosome. This chain is Elongation factor G, found in Francisella philomiragia subsp. philomiragia (strain ATCC 25017 / CCUG 19701 / FSC 153 / O#319-036).